Consider the following 347-residue polypeptide: Glycerol-1-phosphate dehydrogenase [NAD(P)+] (347 aa).

NAD(+)-binding positions include 94-98 (GKVID) and 116-119 (TAAS). Residue D121 coordinates substrate. Residue S125 coordinates NAD(+). Residue D168 participates in substrate binding. D168 and H248 together coordinate Zn(2+). H252 serves as a coordination point for substrate. H264 contributes to the Zn(2+) binding site.

It belongs to the glycerol-1-phosphate dehydrogenase family. In terms of assembly, homooctamer. The cofactor is Zn(2+).

It is found in the cytoplasm. The enzyme catalyses sn-glycerol 1-phosphate + NAD(+) = dihydroxyacetone phosphate + NADH + H(+). It catalyses the reaction sn-glycerol 1-phosphate + NADP(+) = dihydroxyacetone phosphate + NADPH + H(+). It functions in the pathway membrane lipid metabolism; glycerophospholipid metabolism. With respect to regulation, partially inhibited by divalent metal cations such as Co(2+), Cu(2+) and Ni(2+). In terms of biological role, catalyzes the NAD(P)H-dependent reduction of dihydroxyacetonephosphate (DHAP or glycerone phosphate) to glycerol 1-phosphate (G1P). The G1P thus generated is used as the glycerophosphate backbone of phospholipids in the cellular membranes of Archaea. Is also able to catalyze the reverse reaction, i.e. the NAD(P)(+)-dependent oxidation of G1P but not of G3P. Is not active toward glycerol, dihydroxyacetone, glyceraldehyde-3-phosphate, glyceraldehyde and glycerol-2-phosphate. This Methanothermobacter thermautotrophicus (strain ATCC 29096 / DSM 1053 / JCM 10044 / NBRC 100330 / Delta H) (Methanobacterium thermoautotrophicum) protein is Glycerol-1-phosphate dehydrogenase [NAD(P)+] (egsA).